Consider the following 461-residue polypeptide: MLKIFNTLTRQKEEFKPIHAGEVGMYVCGITVYDLCHIGHGRTFVAFDVVARYLRFLGYKLKYVRNITDIDDKIIKRANENGESFVALVDRMIAEMHKDFDALNILRPDMEPRATHHIAEIIELTEQLIAKGHAYVADNGDVMFDVPTDPTYGVLSRQDLDQLQAGARVDVVDDKRNPMDFVLWKMSKEGEPSWPSPWGAGRPGWHIECSAMNCKQLGNHFDIHGGGSDLMFPHHENEIAQSTCAHDGQYVNYWMHSGMVMVDREKMSKSLGNFFTVRDVLKYYDAETVRYFLMSGHYRSQLNYSEENLKQTRAALERLYTALRGTDKTVAPAGGEAFEARFIEAMDDDFNTPEAYSVLFDMAREVNRLKAEDMAAANAMASHLRKLSAVLGLLEQEPEAFLQSGAQADDSEVAEIEALIQQRLDARKAKDWAAADAARDRLNEMGIVLEDGPQGTTWRRK.

Residue Cys28 coordinates Zn(2+). Positions 30 to 40 (ITVYDLCHIGH) match the 'HIGH' region motif. Zn(2+) is bound by residues Cys209, His234, and Glu238. The short motif at 266 to 270 (KMSKS) is the 'KMSKS' region element. Position 269 (Lys269) interacts with ATP.

Belongs to the class-I aminoacyl-tRNA synthetase family. Monomer. It depends on Zn(2+) as a cofactor.

The protein localises to the cytoplasm. The catalysed reaction is tRNA(Cys) + L-cysteine + ATP = L-cysteinyl-tRNA(Cys) + AMP + diphosphate. The protein is Cysteine--tRNA ligase of Shigella boydii serotype 18 (strain CDC 3083-94 / BS512).